We begin with the raw amino-acid sequence, 271 residues long: Formamidopyrimidine-DNA glycosylase (271 aa).

Catalysis depends on Pro2, which acts as the Schiff-base intermediate with DNA. The active-site Proton donor is Glu3. The active-site Proton donor; for beta-elimination activity is Lys58. The DNA site is built by His91 and Arg109. The FPG-type zinc finger occupies 236–270 (FVYGREGLACRVCATPVRRVVIGQRSTFFCPRCQR). The active-site Proton donor; for delta-elimination activity is Arg260.

This sequence belongs to the FPG family. Monomer. Requires Zn(2+) as cofactor.

It carries out the reaction Hydrolysis of DNA containing ring-opened 7-methylguanine residues, releasing 2,6-diamino-4-hydroxy-5-(N-methyl)formamidopyrimidine.. The catalysed reaction is 2'-deoxyribonucleotide-(2'-deoxyribose 5'-phosphate)-2'-deoxyribonucleotide-DNA = a 3'-end 2'-deoxyribonucleotide-(2,3-dehydro-2,3-deoxyribose 5'-phosphate)-DNA + a 5'-end 5'-phospho-2'-deoxyribonucleoside-DNA + H(+). Involved in base excision repair of DNA damaged by oxidation or by mutagenic agents. Acts as a DNA glycosylase that recognizes and removes damaged bases. Has a preference for oxidized purines, such as 7,8-dihydro-8-oxoguanine (8-oxoG). Has AP (apurinic/apyrimidinic) lyase activity and introduces nicks in the DNA strand. Cleaves the DNA backbone by beta-delta elimination to generate a single-strand break at the site of the removed base with both 3'- and 5'-phosphates. The protein is Formamidopyrimidine-DNA glycosylase of Aromatoleum aromaticum (strain DSM 19018 / LMG 30748 / EbN1) (Azoarcus sp. (strain EbN1)).